A 384-amino-acid chain; its full sequence is Mitogen-activated protein kinase 8 (384 aa).

The region spanning 26-321 is the Protein kinase domain; sequence YQNLKPIGSG…VDEALQHPYI (296 aa). ATP contacts are provided by residues 32-40 and Lys-55; that span reads IGSGAQGIV. Position 116 is an S-nitrosocysteine (Cys-116). Asp-151 functions as the Proton acceptor in the catalytic mechanism. Thr-183 carries the phosphothreonine; by MAP2K7 modification. Residues 183-185 carry the TXY motif; the sequence is TPY. Tyr-185 is modified (phosphotyrosine; by MAP2K4). The residue at position 377 (Ser-377) is a Phosphoserine.

This sequence belongs to the protein kinase superfamily. CMGC Ser/Thr protein kinase family. MAP kinase subfamily. As to quaternary structure, binds to at least four scaffolding proteins, MAPK8IP1/JIP-1, MAPK8IP2/JIP-2, MAPK8IP3/JIP-3/JSAP1 and SPAG9/MAPK8IP4/JIP-4. These proteins also bind other components of the JNK signaling pathway. Forms a complex with MAPK8IP1 and ARHGEF28. Interacts with TP53 and WWOX. Interacts with JAMP. Interacts with NFATC4. Interacts with MECOM; regulates JNK signaling. Interacts with PIN1; this interaction mediates MAPK8 conformational changes leading to the binding of MAPK8 to its substrates. Interacts with HSF1 (via D domain and preferentially with hyperphosphorylated form); this interaction occurs under both normal growth conditions and immediately upon heat shock. Interacts (phosphorylated form) with NFE2; the interaction phosphorylates NFE2 in undifferentiated cells. Interacts with GRIPAP1. Interacts with POU5F1; phosphorylates POU5F1 at 'Ser-347'. Found in a complex with SH3RF1, RAC1, MAP3K11/MLK3, MAP2K7/MKK7 and MAPK8IP1/JIP1. Found in a complex with SH3RF1, RAC2, MAP3K7/TAK1, MAP2K7/MKK7, MAPK8IP1/JIP1 and MAPK9/JNK2. Mg(2+) serves as cofactor. In terms of processing, phosphorylated by TAOK2. Dually phosphorylated on Thr-183 and Tyr-185 by MAP2K7 and MAP2K4, which activates the enzyme. May be phosphorylated at Thr-183 and Tyr-185 by MAP3K1/MEKK1. Phosphorylated form is more concentrated at synapses than none-phosphorylated. As to expression, brain (at protein level).

Its subcellular location is the cytoplasm. It localises to the nucleus. It is found in the synapse. It catalyses the reaction L-seryl-[protein] + ATP = O-phospho-L-seryl-[protein] + ADP + H(+). The catalysed reaction is L-threonyl-[protein] + ATP = O-phospho-L-threonyl-[protein] + ADP + H(+). Inhibited by SERPINB3. Activated by threonine and tyrosine phosphorylation by either of two dual specificity kinases, MAP2K4 and MAP2K7. MAP2K4 shows a strong preference for Tyr-185 while MAP2K7 phosphorylates Tyr-183 preferentially. Inhibited by dual specificity phosphatases, such as DUSP1. In terms of biological role, serine/threonine-protein kinase involved in various processes such as cell proliferation, differentiation, migration, transformation and programmed cell death. Extracellular stimuli such as pro-inflammatory cytokines or physical stress stimulate the stress-activated protein kinase/c-Jun N-terminal kinase (SAP/JNK) signaling pathway. In this cascade, two dual specificity kinases MAP2K4/MKK4 and MAP2K7/MKK7 phosphorylate and activate MAPK8/JNK1. In turn, MAPK8/JNK1 phosphorylates a number of transcription factors, primarily components of AP-1 such as JUN, JDP2 and ATF2 and thus regulates AP-1 transcriptional activity. Phosphorylates the replication licensing factor CDT1, inhibiting the interaction between CDT1 and the histone H4 acetylase HBO1 to replication origins. Loss of this interaction abrogates the acetylation required for replication initiation. Promotes stressed cell apoptosis by phosphorylating key regulatory factors including p53/TP53 and Yes-associates protein YAP1. In T-cells, MAPK8 and MAPK9 are required for polarized differentiation of T-helper cells into Th1 cells. Contributes to the survival of erythroid cells by phosphorylating the antagonist of cell death BAD upon EPO stimulation. Mediates starvation-induced BCL2 phosphorylation, BCL2 dissociation from BECN1, and thus activation of autophagy. Phosphorylates STMN2 and hence regulates microtubule dynamics, controlling neurite elongation in cortical neurons. In the developing brain, through its cytoplasmic activity on STMN2, negatively regulates the rate of exit from multipolar stage and of radial migration from the ventricular zone. Phosphorylates several other substrates including heat shock factor protein 4 (HSF4), the deacetylase SIRT1, ELK1, or the E3 ligase ITCH. Phosphorylates the CLOCK-BMAL1 heterodimer and plays a role in the regulation of the circadian clock. Phosphorylates the heat shock transcription factor HSF1, suppressing HSF1-induced transcriptional activity. Phosphorylates POU5F1, which results in the inhibition of POU5F1's transcriptional activity and enhances its proteasomal degradation. Phosphorylates JUND and this phosphorylation is inhibited in the presence of MEN1. In neurons, phosphorylates SYT4 which captures neuronal dense core vesicles at synapses. Phosphorylates EIF4ENIF1/4-ET in response to oxidative stress, promoting P-body assembly. Phosphorylates SIRT6 in response to oxidative stress, stimulating its mono-ADP-ribosyltransferase activity. Phosphorylates NLRP3, promoting assembly of the NLRP3 inflammasome. Phosphorylates ALKBH5 in response to reactive oxygen species (ROS), promoting ALKBH5 sumoylation and inactivation. This is Mitogen-activated protein kinase 8 (Mapk8) from Mus musculus (Mouse).